Reading from the N-terminus, the 297-residue chain is Phosphatidylglycerol--prolipoprotein diacylglyceryl transferase (297 aa).

3 helical membrane passes run 17–37, 59–79, and 97–117; these read LAVRWYGLMYLVGFIAAIVVG, MLFYGVLGTVLGGRLGYVLFY, and GGMSFHGGFLGVTLAMVLFAW. R142 contributes to the a 1,2-diacyl-sn-glycero-3-phospho-(1'-sn-glycerol) binding site. 2 consecutive transmembrane segments (helical) span residues 230 to 250 and 257 to 277; these read MGAVSALFLIGYGLARFTVEF and FLGLLALGLSMGQWLSLPMIV.

It belongs to the Lgt family.

The protein localises to the cell inner membrane. It carries out the reaction L-cysteinyl-[prolipoprotein] + a 1,2-diacyl-sn-glycero-3-phospho-(1'-sn-glycerol) = an S-1,2-diacyl-sn-glyceryl-L-cysteinyl-[prolipoprotein] + sn-glycerol 1-phosphate + H(+). Its pathway is protein modification; lipoprotein biosynthesis (diacylglyceryl transfer). Its function is as follows. Catalyzes the transfer of the diacylglyceryl group from phosphatidylglycerol to the sulfhydryl group of the N-terminal cysteine of a prolipoprotein, the first step in the formation of mature lipoproteins. The sequence is that of Phosphatidylglycerol--prolipoprotein diacylglyceryl transferase from Burkholderia multivorans (strain ATCC 17616 / 249).